The following is a 262-amino-acid chain: Hydroxyacylglutathione hydrolase (262 aa).

Zn(2+)-binding residues include histidine 53, histidine 55, aspartate 57, histidine 58, histidine 111, aspartate 128, and histidine 166.

It belongs to the metallo-beta-lactamase superfamily. Glyoxalase II family. In terms of assembly, monomer. The cofactor is Zn(2+).

It catalyses the reaction an S-(2-hydroxyacyl)glutathione + H2O = a 2-hydroxy carboxylate + glutathione + H(+). Its pathway is secondary metabolite metabolism; methylglyoxal degradation; (R)-lactate from methylglyoxal: step 2/2. Thiolesterase that catalyzes the hydrolysis of S-D-lactoyl-glutathione to form glutathione and D-lactic acid. In Nitrosomonas europaea (strain ATCC 19718 / CIP 103999 / KCTC 2705 / NBRC 14298), this protein is Hydroxyacylglutathione hydrolase.